A 1500-amino-acid chain; its full sequence is Rho GTPase-activating protein 35 (1500 aa).

The interval 1–266 (MMMARKQDVR…IPYFEALKQQ (266 aa)) is has GTPase activity, required for proper localization. Residues Lys-28, 33 to 37 (IGKSC), Leu-52, Ser-56, 95 to 97 (EQT), 201 to 203 (KCD), and 229 to 231 (SAR) each bind GTP. FF domains follow at residues 270-327 (IATA…HIHR), 368-422 (KLLE…HLEK), 429-483 (RAEM…HQKQ), and 485-550 (IDKA…HIHF). Tyr-308 is subject to Phosphotyrosine. Residue Ser-589 is modified to Phosphoserine. The 176-residue stretch at 592–767 (DPNIDRINLV…LLDSKRNLNL (176 aa)) folds into the pG1 pseudoGTPase domain. Ser-770 and Ser-773 each carry phosphoserine. The region spanning 783-947 (RIVMCLMCGD…FKDVVDKKNI (165 aa)) is the pG2 pseudoGTPase domain. Ser-970, Ser-975, Ser-985, Ser-1002, and Ser-1073 each carry phosphoserine. The interval 970-989 (SPRAGSPLCNSNLQDSEEDI) is disordered. The interval 1058–1090 (SYLDQGHRDGQRKSVSSSTWLPPDGFDPSDYAE) is disordered. Tyr-1088 is modified (phosphotyrosine). Position 1106 is a phosphotyrosine; by ABL2 and PTK6 (Tyr-1106). Residues 1125–1142 (KAQSNGSGNGSDSEMDTS) show a composition bias toward polar residues. The segment at 1125-1147 (KAQSNGSGNGSDSEMDTSSLERG) is disordered. Phosphoserine occurs at positions 1135, 1143, 1151, 1177, 1180, and 1222. The disordered stretch occupies residues 1178–1208 (VGSDDELGPIRKKEEDQASQGYKGDNAVIPY). Residues 1214–1237 (PRRRNILRSLRRNTKKPKPKPRPS) are required for phospholipid binding and regulation of the substrate preference. Thr-1227 is subject to Phosphothreonine. Ser-1237 carries the post-translational modification Phosphoserine. The 188-residue stretch at 1250-1437 (VPLTTVVTPE…LFIQQCPFFF (188 aa)) folds into the Rho-GAP domain. The segment at 1444–1500 (EPPGATPSSPSAVASTVPFLTSTPVTSQPSPPQSPPPTPQSPMQALLPSQLQAEHTL) is disordered. The span at 1449–1471 (TPSSPSAVASTVPFLTSTPVTSQ) shows a compositional bias: low complexity. The span at 1472 to 1483 (PSPPQSPPPTPQ) shows a compositional bias: pro residues. A phosphoserine mark is found at Ser-1473 and Ser-1477. Thr-1481 carries the post-translational modification Phosphothreonine. Phosphoserine is present on Ser-1484. The span at 1490 to 1500 (LPSQLQAEHTL) shows a compositional bias: polar residues.

In terms of assembly, interacts with RASA1. Interacts with the general transcription factor GTF2I, the interaction sequesters GTF2I in the cytoplasm. Post-translationally, phosphorylation of Tyr-1106 by PTK6 promotes the association with RASA1, inactivating RHOA while activating RAS. Phosphorylation at Tyr-308 by PDGFRA inhibits binding to GTF2I. Phosphorylated by PRKCA at Ser-1222 and Thr-1227, induces relocalization from the cytoplasm to regions of plasma membrane ruffling and prevents the binding and substrate specificity regulation by phospholipids. In brain, phosphorylated by FYN and SRC. During focal adhesion formation, phosphorylated by MAPK1 and MAPK3 at the C-terminal region, probably at Ser-1452, Ser-1477, Thr-1481 and Ser-1484. Phosphorylation by MAPK1 and MAPK3 inhibits GAP function and localizes ARGHAP35 away from newly forming focal adhesions and stress fibers in cells spreading on fibronectin. Phosphorylation at Ser-1477 and Thr-1481 by GSK3B requires priming by MAPK and inhibits RhoGAP activity and modulates polarized cell migration. Strongly expressed in retina (photoreceptor layer) and brain. Expression is maximal in the occipital, frontal, temporal lobe and also the cerebellum. Medium expression in the medulla and also in kidney, lung, liver, heart and spleen.

The protein localises to the cytoplasm. The protein resides in the cytoskeleton. It localises to the cilium basal body. It is found in the nucleus. Its subcellular location is the cell membrane. Rho GTPase-activating protein (GAP). Binds several acidic phospholipids which inhibits the Rho GAP activity to promote the Rac GAP activity. This binding is inhibited by phosphorylation by PRKCA. Involved in cell differentiation as well as cell adhesion and migration, plays an important role in retinal tissue morphogenesis, neural tube fusion, midline fusion of the cerebral hemispheres and mammary gland branching morphogenesis. Transduces signals from p21-ras to the nucleus, acting via the ras GTPase-activating protein (GAP). Transduces SRC-dependent signals from cell-surface adhesion molecules, such as laminin, to promote neurite outgrowth. Regulates axon outgrowth, guidance and fasciculation. Modulates Rho GTPase-dependent F-actin polymerization, organization and assembly, is involved in polarized cell migration and in the positive regulation of ciliogenesis and cilia elongation. During mammary gland development, is required in both the epithelial and stromal compartments for ductal outgrowth. Represses transcription of the glucocorticoid receptor by binding to the cis-acting regulatory sequence 5'-GAGAAAAGAAACTGGAGAAACTC-3'; this function is however unclear and would need additional experimental evidences. The protein is Rho GTPase-activating protein 35 of Canis lupus familiaris (Dog).